The sequence spans 300 residues: uncharacterized protein (300 aa).

H274 serves as the catalytic Proton acceptor.

Belongs to the AB hydrolase superfamily. In terms of assembly, monomer.

The catalysed reaction is a carboxylic ester + H2O = an alcohol + a carboxylate + H(+). This is an uncharacterized protein from Bacillus subtilis (strain 168).